Here is a 131-residue protein sequence, read N- to C-terminus: Large ribosomal subunit protein bL19 (131 aa).

Belongs to the bacterial ribosomal protein bL19 family.

This protein is located at the 30S-50S ribosomal subunit interface and may play a role in the structure and function of the aminoacyl-tRNA binding site. This chain is Large ribosomal subunit protein bL19, found in Rhodopseudomonas palustris (strain BisB18).